The primary structure comprises 390 residues: Acetylornithine aminotransferase (390 aa).

Residues 105–106 (GA) and F132 each bind pyridoxal 5'-phosphate. R135 lines the N(2)-acetyl-L-ornithine pocket. Residue 217–220 (DEVQ) coordinates pyridoxal 5'-phosphate. An N6-(pyridoxal phosphate)lysine modification is found at K246. S274 serves as a coordination point for N(2)-acetyl-L-ornithine. T275 is a binding site for pyridoxal 5'-phosphate.

It belongs to the class-III pyridoxal-phosphate-dependent aminotransferase family. ArgD subfamily. As to quaternary structure, homodimer. It depends on pyridoxal 5'-phosphate as a cofactor.

It localises to the cytoplasm. It catalyses the reaction N(2)-acetyl-L-ornithine + 2-oxoglutarate = N-acetyl-L-glutamate 5-semialdehyde + L-glutamate. The protein operates within amino-acid biosynthesis; L-arginine biosynthesis; N(2)-acetyl-L-ornithine from L-glutamate: step 4/4. In Methanothermobacter thermautotrophicus (strain ATCC 29096 / DSM 1053 / JCM 10044 / NBRC 100330 / Delta H) (Methanobacterium thermoautotrophicum), this protein is Acetylornithine aminotransferase.